Reading from the N-terminus, the 971-residue chain is Isoleucine--tRNA ligase (971 aa).

The 'HIGH' region signature appears at 64–74 (PYANGHIHIGH). E602 serves as a coordination point for L-isoleucyl-5'-AMP. Positions 643–647 (KMSKS) match the 'KMSKS' region motif. K646 contacts ATP.

The protein belongs to the class-I aminoacyl-tRNA synthetase family. IleS type 1 subfamily. Monomer.

It localises to the cytoplasm. The enzyme catalyses tRNA(Ile) + L-isoleucine + ATP = L-isoleucyl-tRNA(Ile) + AMP + diphosphate. In terms of biological role, catalyzes the attachment of isoleucine to tRNA(Ile). As IleRS can inadvertently accommodate and process structurally similar amino acids such as valine, to avoid such errors it has two additional distinct tRNA(Ile)-dependent editing activities. One activity is designated as 'pretransfer' editing and involves the hydrolysis of activated Val-AMP. The other activity is designated 'posttransfer' editing and involves deacylation of mischarged Val-tRNA(Ile). The chain is Isoleucine--tRNA ligase from Bartonella henselae (strain ATCC 49882 / DSM 28221 / CCUG 30454 / Houston 1) (Rochalimaea henselae).